The chain runs to 427 residues: Glutamate-1-semialdehyde 2,1-aminomutase (427 aa).

K265 is subject to N6-(pyridoxal phosphate)lysine.

Belongs to the class-III pyridoxal-phosphate-dependent aminotransferase family. HemL subfamily. Homodimer. It depends on pyridoxal 5'-phosphate as a cofactor.

The protein resides in the cytoplasm. It carries out the reaction (S)-4-amino-5-oxopentanoate = 5-aminolevulinate. The protein operates within porphyrin-containing compound metabolism; protoporphyrin-IX biosynthesis; 5-aminolevulinate from L-glutamyl-tRNA(Glu): step 2/2. The sequence is that of Glutamate-1-semialdehyde 2,1-aminomutase from Pseudomonas savastanoi pv. phaseolicola (strain 1448A / Race 6) (Pseudomonas syringae pv. phaseolicola (strain 1448A / Race 6)).